A 400-amino-acid polypeptide reads, in one-letter code: Protein phyllopod (400 aa).

An interaction with sina region spans residues 109-127; sequence QERTKLRPVAMVRPTVRVQ. The tract at residues 125-145 is disordered; the sequence is RVQPQSQPQLQPQVPINPTPA. Over residues 127-138 the composition is skewed to low complexity; it reads QPQSQPQLQPQV. The tract at residues 241-320 is interaction with ttk; sequence YQRFPQPSVD…TAISEVLPTA (80 aa). Residues 319-362 adopt a coiled-coil conformation; the sequence is TARYQVTHEENKENQQAQEMELELEEEEEVDGRAELEVVQEAEA. A disordered region spans residues 346-382; sequence EEVDGRAELEVVQEAEAPLEPQSHHKQGNSHQNSHQA.

In terms of assembly, component of some E3 complex at least composed of sina, ebi and phyl, required for the degradation of ttk. In terms of tissue distribution, in embryos, it is ubiquitously present before cellularization. During stages 9-11, it is expressed in neuroblasts and the SOP cells. From stage 12 onward, it decreases, but remains in a subset of PNS cells at stages 12-14. Weakly expressed in wing imaginal disks, in the SOP cells of wing margin bristles, notal macrochaetes, and other sensory organs. In leg disks, it is expressed in the precursors of the femoral chordotonal organs, as well as in external sensory SOP cells. Strongly expressed in the eye-antenna disk, it is specifically expressed in R1, R6 and R7 cells, and not in R3, R3, R4, R5 and R8 cells.

It localises to the nucleus. Functionally, essential adapter component of E3 ubiquitin ligase complexes; involved in R7 photoreceptor cell differentiation, embryonic nervous system, external sensory organ development and specification of particular muscles. E3 ubiquitin ligase complexes mediate ubiquitination and subsequent proteasomal degradation of target proteins. Required for specification of R7 photoreceptor cell fate in the eye by participating in the ubiquitination and subsequent proteasomal degradation of Tramtrack (ttk), a general inhibitor of photoreceptor differentiation. Acts downstream of Notch signaling to specify the fate of the SOP (sensory organ precursor) cells and their progeny, probably via the sina-mediated proteasomal degradation of ttk. Its restricted pattern of expression, upon Notch and Ras signaling pathways, suggests that it acts as a key determinant in E3 complexes to trigger protein proteolysis in appropriate cells. This is Protein phyllopod (phyl) from Drosophila melanogaster (Fruit fly).